Reading from the N-terminus, the 183-residue chain is MKEKIPFYNEKEFHDMVKKTKKGTFSGWYIIDKDNKSVEFSGSFNRQFKLNKPVIPVNTEYVTRKEFNEYKVSNDQRLTKIETTLAAQGEQINKLTQTVEKQGEQINQLVQVVLLHGEQINKLTQTVEKQGEQIKELQVEQKAQGEQIKAQGKQIKAQGKTLKSILQALGGINKRLDKIDPPK.

It belongs to the UPF0134 family.

The polypeptide is UPF0134 protein MPN_100 (Mycoplasma pneumoniae (strain ATCC 29342 / M129 / Subtype 1) (Mycoplasmoides pneumoniae)).